A 29-amino-acid polypeptide reads, in one-letter code: Cytochrome b6-f complex subunit 8 (29 aa).

Residues 3–23 (IVSLAWASLMVVFTFSLSLVV) form a helical membrane-spanning segment.

The protein belongs to the PetN family. As to quaternary structure, the 4 large subunits of the cytochrome b6-f complex are cytochrome b6, subunit IV (17 kDa polypeptide, PetD), cytochrome f and the Rieske protein, while the 4 small subunits are PetG, PetL, PetM and PetN. The complex functions as a dimer.

The protein localises to the plastid. Its subcellular location is the chloroplast thylakoid membrane. Component of the cytochrome b6-f complex, which mediates electron transfer between photosystem II (PSII) and photosystem I (PSI), cyclic electron flow around PSI, and state transitions. The chain is Cytochrome b6-f complex subunit 8 from Coffea arabica (Arabian coffee).